We begin with the raw amino-acid sequence, 427 residues long: Tol-Pal system protein TolB (427 aa).

The first 25 residues, 1 to 25 (MKTFAQLRLLLAAAALALLSFSAQA), serve as a signal peptide directing secretion.

It belongs to the TolB family. The Tol-Pal system is composed of five core proteins: the inner membrane proteins TolA, TolQ and TolR, the periplasmic protein TolB and the outer membrane protein Pal. They form a network linking the inner and outer membranes and the peptidoglycan layer.

It is found in the periplasm. Functionally, part of the Tol-Pal system, which plays a role in outer membrane invagination during cell division and is important for maintaining outer membrane integrity. This is Tol-Pal system protein TolB from Azoarcus sp. (strain BH72).